We begin with the raw amino-acid sequence, 581 residues long: Chaperonin GroEL 1 (581 aa).

ATP is bound by residues 29–32, 86–90, Gly-413, and Asp-492; these read TIGP and DGTTT.

Belongs to the chaperonin (HSP60) family. Forms a cylinder of 14 subunits composed of two heptameric rings stacked back-to-back. Interacts with the co-chaperonin GroES.

It is found in the cytoplasm. The catalysed reaction is ATP + H2O + a folded polypeptide = ADP + phosphate + an unfolded polypeptide.. Functionally, together with its co-chaperonin GroES, plays an essential role in assisting protein folding. The GroEL-GroES system forms a nano-cage that allows encapsulation of the non-native substrate proteins and provides a physical environment optimized to promote and accelerate protein folding. The chain is Chaperonin GroEL 1 from Prochlorococcus marinus subsp. pastoris (strain CCMP1986 / NIES-2087 / MED4).